The chain runs to 152 residues: Lipoprotein signal peptidase (152 aa).

A run of 3 helical transmembrane segments spans residues 33–53 (VVPP…FGLL), 58–78 (MLFV…YFKI), and 83–102 (PVLD…NLAD). Catalysis depends on residues Asp-111 and Asp-125. Residues 120 to 140 (VFNLADTAIVTGAFLLAWALL) form a helical membrane-spanning segment.

It belongs to the peptidase A8 family.

It localises to the cell membrane. It catalyses the reaction Release of signal peptides from bacterial membrane prolipoproteins. Hydrolyzes -Xaa-Yaa-Zaa-|-(S,diacylglyceryl)Cys-, in which Xaa is hydrophobic (preferably Leu), and Yaa (Ala or Ser) and Zaa (Gly or Ala) have small, neutral side chains.. It functions in the pathway protein modification; lipoprotein biosynthesis (signal peptide cleavage). Its function is as follows. This protein specifically catalyzes the removal of signal peptides from prolipoproteins. The protein is Lipoprotein signal peptidase of Pelotomaculum thermopropionicum (strain DSM 13744 / JCM 10971 / SI).